Consider the following 398-residue polypeptide: DNA-directed RNA polymerase III subunit RPC4 (398 aa).

Residues 1–114 (MSEGNAAGEP…SHSIFEQGPA (114 aa)) are disordered. Ser-2 carries the N-acetylserine modification. Residue Ser-42 is modified to Phosphoserine. Residues 66–100 (KIKEEPKEEVTVKKEKRERDRDRQREGHGRGRGRP) show a composition bias toward basic and acidic residues. Residues Lys-68 and Lys-78 each participate in a glycyl lysine isopeptide (Lys-Gly) (interchain with G-Cter in SUMO2) cross-link. An omega-N-methylarginine mark is found at Arg-95, Arg-97, and Arg-99. Glycyl lysine isopeptide (Lys-Gly) (interchain with G-Cter in SUMO2) cross-links involve residues Lys-141, Lys-152, Lys-160, Lys-190, Lys-199, Lys-206, Lys-220, Lys-285, Lys-302, Lys-310, and Lys-396. The segment at 220–244 (KEEPRDEEEEAKMKAPPKAARKTPG) is disordered.

Belongs to the eukaryotic RPC4/POLR3D RNA polymerase subunit family. In terms of assembly, component of the RNA polymerase III complex consisting of 17 subunits: a ten-subunit horseshoe-shaped catalytic core composed of POLR3A/RPC1, POLR3B/RPC2, POLR1C/RPAC1, POLR1D/RPAC2, POLR3K/RPC10, POLR2E/RPABC1, POLR2F/RPABC2, POLR2H/RPABC3, POLR2K/RPABC4 and POLR2L/RPABC5; a mobile stalk composed of two subunits POLR3H/RPC8 and CRCP/RPC9, protruding from the core and functioning primarily in transcription initiation; and additional subunits homologous to general transcription factors of the RNA polymerase II machinery, POLR3C/RPC3-POLR3F/RPC6-POLR3G/RPC7 heterotrimer required for transcription initiation and POLR3D/RPC4-POLR3E/RPC5 heterodimer involved in both transcription initiation and termination. Post-translationally, sumoylation on Lys-141 can serve as a signal to mark misfolded Pol III for proteasomal degradation.

Its subcellular location is the nucleus. DNA-dependent RNA polymerase catalyzes the transcription of DNA into RNA using the four ribonucleoside triphosphates as substrates. Specific peripheric component of RNA polymerase III (Pol III) which synthesizes small non-coding RNAs including 5S rRNA, snRNAs, tRNAs and miRNAs from at least 500 distinct genomic loci. Assembles with POLR3E/RPC5 forming a subcomplex that binds the Pol III core. Enables recruitment of Pol III at transcription initiation site and drives transcription initiation from both type 2 and type 3 DNA promoters. Required for efficient transcription termination and reinitiation. Pol III plays a key role in sensing and limiting infection by intracellular bacteria and DNA viruses. Acts as nuclear and cytosolic DNA sensor involved in innate immune response. Can sense non-self dsDNA that serves as template for transcription into dsRNA. The non-self RNA polymerase III transcripts, such as Epstein-Barr virus-encoded RNAs (EBERs) induce type I interferon and NF-kappa-B through the RIG-I pathway. The sequence is that of DNA-directed RNA polymerase III subunit RPC4 from Homo sapiens (Human).